The primary structure comprises 324 residues: Probable UDP-sugar transporter protein SLC35A4 (324 aa).

At 1–18 (MSVEDGGMPGLSRPRQAR) the chain is on the cytoplasmic side. A helical transmembrane segment spans residues 19–39 (WTLMLLLSTAMYGAHAPLLAL). At 40–52 (CHVDGRVPFRPSS) the chain is on the lumenal side. A helical membrane pass occupies residues 53–73 (AVLLTELTKLLLCAFSLLVGW). The Cytoplasmic portion of the chain corresponds to 74-85 (QAWPQGAPPWRQ). The helical transmembrane segment at 86–106 (AAPFALSALLYGANNNLVIYL) threads the bilayer. Residues 107-142 (QRYMDPSTYQVLSNLKIGSTAVLYCLCLRHRLSVRQ) lie on the Lumenal side of the membrane. Residues 143-163 (GLALLLLMAAGACYAAGGLQV) traverse the membrane as a helical segment. The Cytoplasmic segment spans residues 164-180 (PGNTLPRPPPAAAASPM). Residues 181 to 201 (PLHITPLGLLLLILYCLISGL) traverse the membrane as a helical segment. At 202–214 (SSVYTELLMKRQQ) the chain is on the lumenal side. Residues 215 to 235 (LPLALQNLFLYTFGVLLNLGL) form a helical membrane-spanning segment. The Cytoplasmic portion of the chain corresponds to 236-250 (HAGGGPGPGLLEGFS). The chain crosses the membrane as a helical span at residues 251–271 (GWAALVVLSQALNGLLMSVVM). The Lumenal segment spans residues 272 to 275 (KHGS). The helical transmembrane segment at 276–298 (SITRLFVVSCSLVVNAVLSAVLL) threads the bilayer. The Cytoplasmic portion of the chain corresponds to 299–324 (RLQLTAAFFLATLLIGLAMRLYYGSR).

This sequence belongs to the nucleotide-sugar transporter family. SLC35A subfamily. In terms of assembly, found in a complex with SLC35A2 and SLC35A3.

Its subcellular location is the golgi apparatus membrane. It catalyses the reaction CDP-L-ribitol(in) + CDP(out) = CDP-L-ribitol(out) + CDP(in). Mediates the transport of CDP-ribitol. Does not exhibit CMP-sialic acid, UDP-galactose and UDP-N-acetylglucosamine transport activity. This chain is Probable UDP-sugar transporter protein SLC35A4, found in Pongo abelii (Sumatran orangutan).